We begin with the raw amino-acid sequence, 210 residues long: NADH dehydrogenase [ubiquinone] iron-sulfur protein 8, mitochondrial (210 aa).

Residues 1–34 (MRCLTTPMLLRALAQAARAGPPCGRSLHSSAVAA) constitute a mitochondrion transit peptide. 4Fe-4S ferredoxin-type domains follow at residues 102 to 131 (RRYP…IEAE) and 141 to 170 (TRYD…EGPN). [4Fe-4S] cluster contacts are provided by Cys111, Cys114, Cys117, Cys121, Cys150, Cys153, Cys156, and Cys160.

It belongs to the complex I 23 kDa subunit family. Core subunit of respiratory chain NADH dehydrogenase (Complex I) which is composed of 45 different subunits. This is a component of the iron-sulfur (IP) fragment of the enzyme. Interacts with RAB5IF. The cofactor is [4Fe-4S] cluster.

It is found in the mitochondrion inner membrane. The catalysed reaction is a ubiquinone + NADH + 5 H(+)(in) = a ubiquinol + NAD(+) + 4 H(+)(out). In terms of biological role, core subunit of the mitochondrial membrane respiratory chain NADH dehydrogenase (Complex I) which catalyzes electron transfer from NADH through the respiratory chain, using ubiquinone as an electron acceptor. Essential for the catalytic activity and assembly of complex I. This is NADH dehydrogenase [ubiquinone] iron-sulfur protein 8, mitochondrial (NDUFS8) from Pongo abelii (Sumatran orangutan).